The chain runs to 86 residues: MKTLLLTLVVLTIACLDLGYTKTCFNDDLANPKTTELCRHSMYFCFKNSWIAGGVERIERGCSLTCPDIKYNGKYIYCCTRDNCNA.

Positions 1-21 (MKTLLLTLVVLTIACLDLGYT) are cleaved as a signal peptide. 4 cysteine pairs are disulfide-bonded: cysteine 24-cysteine 45, cysteine 38-cysteine 62, cysteine 66-cysteine 78, and cysteine 79-cysteine 84.

It belongs to the three-finger toxin family. Short-chain subfamily. Orphan group IX sub-subfamily. As to expression, expressed by the venom gland.

Its subcellular location is the secreted. This chain is Candiduxin-1, found in Bungarus candidus (Malayan krait).